Consider the following 251-residue polypeptide: Thiamine thiazole synthase (251 aa).

NAD(+)-binding positions include serine 34, glutamate 53–lysine 54, glycine 61, valine 125, and histidine 151–aspartate 153. 2 residues coordinate Fe cation: aspartate 153 and histidine 168. NAD(+) is bound at residue methionine 216. Arginine 226 is a binding site for glycine.

This sequence belongs to the THI4 family. As to quaternary structure, homooctamer; tetramer of dimers. Fe(2+) serves as cofactor.

The enzyme catalyses hydrogen sulfide + glycine + NAD(+) = ADP-5-ethyl-4-methylthiazole-2-carboxylate + nicotinamide + 3 H2O + H(+). Its pathway is cofactor biosynthesis; thiamine diphosphate biosynthesis. Involved in the biosynthesis of the thiazole moiety of thiamine. Catalyzes the conversion of NAD and glycine to adenosine diphosphate 5-(2-hydroxyethyl)-4-methylthiazole-2-carboxylate (ADT), an adenylated thiazole intermediate, using free sulfide as a source of sulfur. The chain is Thiamine thiazole synthase from Thermococcus kodakarensis (strain ATCC BAA-918 / JCM 12380 / KOD1) (Pyrococcus kodakaraensis (strain KOD1)).